The following is a 356-amino-acid chain: Glycerol-1-phosphate dehydrogenase [NAD(P)+] (356 aa).

Residues 103–107 and 125–128 each bind NAD(+); these read GRSID and TAAS. D130 lines the substrate pocket. S134 is a binding site for NAD(+). D177 serves as a coordination point for substrate. Zn(2+)-binding residues include D177 and H257. Residue H261 participates in substrate binding. Residue H273 coordinates Zn(2+).

This sequence belongs to the glycerol-1-phosphate dehydrogenase family. Requires Zn(2+) as cofactor.

The protein resides in the cytoplasm. It catalyses the reaction sn-glycerol 1-phosphate + NAD(+) = dihydroxyacetone phosphate + NADH + H(+). The catalysed reaction is sn-glycerol 1-phosphate + NADP(+) = dihydroxyacetone phosphate + NADPH + H(+). Its pathway is membrane lipid metabolism; glycerophospholipid metabolism. In terms of biological role, catalyzes the NAD(P)H-dependent reduction of dihydroxyacetonephosphate (DHAP or glycerone phosphate) to glycerol 1-phosphate (G1P). The G1P thus generated is used as the glycerophosphate backbone of phospholipids in the cellular membranes of Archaea. This is Glycerol-1-phosphate dehydrogenase [NAD(P)+] from Methanosarcina barkeri (strain Fusaro / DSM 804).